The sequence spans 188 residues: dCTP deaminase (188 aa).

DCTP-binding positions include 111 to 116 (KSTYAR), 135 to 137 (TLE), glutamine 156, tyrosine 170, lysine 179, and glutamine 180. Glutamate 137 functions as the Proton donor/acceptor in the catalytic mechanism.

This sequence belongs to the dCTP deaminase family. In terms of assembly, homotrimer.

It catalyses the reaction dCTP + H2O + H(+) = dUTP + NH4(+). The protein operates within pyrimidine metabolism; dUMP biosynthesis; dUMP from dCTP (dUTP route): step 1/2. Its function is as follows. Catalyzes the deamination of dCTP to dUTP. The sequence is that of dCTP deaminase from Rickettsia akari (strain Hartford).